A 419-amino-acid polypeptide reads, in one-letter code: 2-amino-3-ketobutyrate coenzyme A ligase, mitochondrial (419 aa).

Residues 1 to 21 (MWPGNAWRAALFWVPRGRRAQ) constitute a mitochondrion transit peptide. At K45 the chain carries N6-acetyllysine; alternate. An N6-succinyllysine; alternate modification is found at K45. 134–135 (CY) contributes to the pyridoxal 5'-phosphate binding site. Substrate is bound at residue H159. K187 carries the post-translational modification N6-acetyllysine; alternate. At K187 the chain carries N6-succinyllysine; alternate. Pyridoxal 5'-phosphate-binding positions include S206, 262–265 (TLGK), and 295–296 (SN). N6-(pyridoxal phosphate)lysine is present on K265. K326 and K368 each carry N6-succinyllysine. K383 is subject to N6-acetyllysine; alternate. N6-succinyllysine; alternate is present on K383. Position 389 (R389) interacts with substrate.

The protein belongs to the class-II pyridoxal-phosphate-dependent aminotransferase family. It depends on pyridoxal 5'-phosphate as a cofactor. As to expression, strongly expressed in heart, brain, liver and pancreas. Also found in lung.

Its subcellular location is the mitochondrion. It is found in the nucleus. It catalyses the reaction glycine + acetyl-CoA = (2S)-2-amino-3-oxobutanoate + CoA. Pyridoxal phosphate (PLP) dependent enzyme, which catalyzes the cleavage of 2-amino-3-oxobutanoate to glycine and acetyl-CoA. The chain is 2-amino-3-ketobutyrate coenzyme A ligase, mitochondrial from Homo sapiens (Human).